A 257-amino-acid polypeptide reads, in one-letter code: L-aspartate dehydrogenase (257 aa).

A124 and N180 together coordinate NAD(+). The active site involves H208.

Belongs to the L-aspartate dehydrogenase family.

The enzyme catalyses L-aspartate + NADP(+) + H2O = oxaloacetate + NH4(+) + NADPH + H(+). It carries out the reaction L-aspartate + NAD(+) + H2O = oxaloacetate + NH4(+) + NADH + H(+). It functions in the pathway cofactor biosynthesis; NAD(+) biosynthesis; iminoaspartate from L-aspartate (dehydrogenase route): step 1/1. In terms of biological role, specifically catalyzes the NAD or NADP-dependent dehydrogenation of L-aspartate to iminoaspartate. In Methanothermobacter thermautotrophicus (strain ATCC 29096 / DSM 1053 / JCM 10044 / NBRC 100330 / Delta H) (Methanobacterium thermoautotrophicum), this protein is L-aspartate dehydrogenase.